The chain runs to 241 residues: Uracil-DNA glycosylase (241 aa).

Asp71 serves as the catalytic Proton acceptor.

It belongs to the uracil-DNA glycosylase (UDG) superfamily. UNG family.

Its subcellular location is the cytoplasm. The enzyme catalyses Hydrolyzes single-stranded DNA or mismatched double-stranded DNA and polynucleotides, releasing free uracil.. In terms of biological role, excises uracil residues from the DNA which can arise as a result of misincorporation of dUMP residues by DNA polymerase or due to deamination of cytosine. This chain is Uracil-DNA glycosylase, found in Xanthomonas euvesicatoria pv. vesicatoria (strain 85-10) (Xanthomonas campestris pv. vesicatoria).